The chain runs to 491 residues: Anthranilate synthase component 1 (491 aa).

L-tryptophan-binding positions include Ser-49 and 271–273 (PYL). 306-307 (GT) contacts chorismate. Glu-333 contributes to the Mg(2+) binding site. Chorismate is bound by residues Tyr-421, Arg-441, 455 to 457 (GAG), and Gly-457. Glu-470 lines the Mg(2+) pocket.

This sequence belongs to the anthranilate synthase component I family. In terms of assembly, heterotetramer consisting of two non-identical subunits: a beta subunit (TrpG) and a large alpha subunit (TrpE). Mg(2+) is required as a cofactor.

The enzyme catalyses chorismate + L-glutamine = anthranilate + pyruvate + L-glutamate + H(+). The protein operates within amino-acid biosynthesis; L-tryptophan biosynthesis; L-tryptophan from chorismate: step 1/5. Its activity is regulated as follows. Feedback inhibited by tryptophan. Part of a heterotetrameric complex that catalyzes the two-step biosynthesis of anthranilate, an intermediate in the biosynthesis of L-tryptophan. In the first step, the glutamine-binding beta subunit (TrpG) of anthranilate synthase (AS) provides the glutamine amidotransferase activity which generates ammonia as a substrate that, along with chorismate, is used in the second step, catalyzed by the large alpha subunit of AS (TrpE) to produce anthranilate. In the absence of TrpG, TrpE can synthesize anthranilate directly from chorismate and high concentrations of ammonia. In Neisseria gonorrhoeae (strain ATCC 700825 / FA 1090), this protein is Anthranilate synthase component 1 (trpE).